Reading from the N-terminus, the 513-residue chain is ATP synthase subunit alpha 2 (513 aa).

Position 169–176 (169–176) interacts with ATP; sequence GDRQTGKT.

This sequence belongs to the ATPase alpha/beta chains family. As to quaternary structure, F-type ATPases have 2 components, CF(1) - the catalytic core - and CF(0) - the membrane proton channel. CF(1) has five subunits: alpha(3), beta(3), gamma(1), delta(1), epsilon(1). CF(0) has three main subunits: a(1), b(2) and c(9-12). The alpha and beta chains form an alternating ring which encloses part of the gamma chain. CF(1) is attached to CF(0) by a central stalk formed by the gamma and epsilon chains, while a peripheral stalk is formed by the delta and b chains.

The protein resides in the cell inner membrane. It carries out the reaction ATP + H2O + 4 H(+)(in) = ADP + phosphate + 5 H(+)(out). Functionally, produces ATP from ADP in the presence of a proton gradient across the membrane. The alpha chain is a regulatory subunit. This is ATP synthase subunit alpha 2 from Shewanella frigidimarina (strain NCIMB 400).